The following is an 880-amino-acid chain: Valine--tRNA ligase (880 aa).

The short motif at 51 to 61 (PNVTGELHLGH) is the 'HIGH' region element. A 'KMSKS' region motif is present at residues 529-533 (KMSKT). An ATP-binding site is contributed by lysine 532. Residues 815-854 (MSTMVDLEAEAKRVEAEIAELETQIERLSARLSDTQFLAK) adopt a coiled-coil conformation.

This sequence belongs to the class-I aminoacyl-tRNA synthetase family. ValS type 1 subfamily. Monomer.

It localises to the cytoplasm. It carries out the reaction tRNA(Val) + L-valine + ATP = L-valyl-tRNA(Val) + AMP + diphosphate. In terms of biological role, catalyzes the attachment of valine to tRNA(Val). As ValRS can inadvertently accommodate and process structurally similar amino acids such as threonine, to avoid such errors, it has a 'posttransfer' editing activity that hydrolyzes mischarged Thr-tRNA(Val) in a tRNA-dependent manner. The polypeptide is Valine--tRNA ligase (Dehalococcoides mccartyi (strain ATCC BAA-2266 / KCTC 15142 / 195) (Dehalococcoides ethenogenes (strain 195))).